A 95-amino-acid chain; its full sequence is Aspartyl/glutamyl-tRNA(Asn/Gln) amidotransferase subunit C (95 aa).

The protein belongs to the GatC family. As to quaternary structure, heterotrimer of A, B and C subunits.

It catalyses the reaction L-glutamyl-tRNA(Gln) + L-glutamine + ATP + H2O = L-glutaminyl-tRNA(Gln) + L-glutamate + ADP + phosphate + H(+). It carries out the reaction L-aspartyl-tRNA(Asn) + L-glutamine + ATP + H2O = L-asparaginyl-tRNA(Asn) + L-glutamate + ADP + phosphate + 2 H(+). Functionally, allows the formation of correctly charged Asn-tRNA(Asn) or Gln-tRNA(Gln) through the transamidation of misacylated Asp-tRNA(Asn) or Glu-tRNA(Gln) in organisms which lack either or both of asparaginyl-tRNA or glutaminyl-tRNA synthetases. The reaction takes place in the presence of glutamine and ATP through an activated phospho-Asp-tRNA(Asn) or phospho-Glu-tRNA(Gln). The sequence is that of Aspartyl/glutamyl-tRNA(Asn/Gln) amidotransferase subunit C from Desulfosudis oleivorans (strain DSM 6200 / JCM 39069 / Hxd3) (Desulfococcus oleovorans).